The sequence spans 350 residues: Serine/arginine-rich splicing factor RS40 (350 aa).

2 consecutive RRM domains span residues 2 to 74 (KPVF…WTKS) and 97 to 168 (KTLF…YAVK). Basic and acidic residues-rich tracts occupy residues 73-82 (KSERGGDKRS) and 167-187 (VKDDDARGNGHSPERRRDRSP). Disordered regions lie at residues 73 to 94 (KSERGGDKRSGGGSRRSSSSMR) and 167 to 350 (VKDD…PADE). 3 positions are modified to phosphoserine: serine 193, serine 195, and serine 211. Basic and acidic residues-rich tracts occupy residues 216 to 227 (YRKERTSPDYGR) and 240 to 255 (GSPEYGRDRRGNDSPR). Phosphoserine occurs at positions 241, 262, 278, 298, 308, 335, and 340. The segment covering 272–289 (NKRERMSPNHSPFKKESP) has biased composition (basic and acidic residues). Residues 299-308 (PIERRERSRS) are compositionally biased toward basic and acidic residues.

This sequence belongs to the splicing factor SR family. RS subfamily. Component of the spliceosome. Interacts with SNRNP35. Interacts with CYP59. Interacts with RCF3 and CPL1. Interacts with DRB1/HYL1 and SE. As to expression, highly expressed in roots and flowers. A presumably longer alternatively spliced form is found in leaves, stems and flowers.

Its subcellular location is the nucleus. The protein localises to the nucleus speckle. In terms of biological role, required for constitutive and alternative pre-mRNA splicing. Involved in primary miRNA processing and pri-miRNA biogenesis. Binds both intronless and intron-containing pri-miRNAs. This Arabidopsis thaliana (Mouse-ear cress) protein is Serine/arginine-rich splicing factor RS40 (RS40).